The chain runs to 140 residues: Sperm protein associated with the nucleus on the X chromosome N3 (140 aa).

3 stretches are compositionally biased toward polar residues: residues 1–20, 62–79, and 131–140; these read MEQPTSSTNGEKTKSPCKSN, INSNQLENDQSQENSINP, and EGSSQDSGED. The tract at residues 1–140 is disordered; that stretch reads MEQPTSSTNG…EGSSQDSGED (140 aa).

The protein belongs to the SPAN-X family.

The sequence is that of Sperm protein associated with the nucleus on the X chromosome N3 (SPANXN3) from Pan troglodytes (Chimpanzee).